The following is a 339-amino-acid chain: Ketol-acid reductoisomerase (NADP(+)) (339 aa).

The 182-residue stretch at 1-182 folds into the KARI N-terminal Rossmann domain; the sequence is MRVYYDRDAD…GGGRSGIIET (182 aa). Residues 24 to 27, K48, S51, T53, and 83 to 86 each bind NADP(+); these read YGSQ and DELQ. H108 is an active-site residue. An NADP(+)-binding site is contributed by G134. The region spanning 183–328 is the KARI C-terminal knotted domain; it reads NFREECETDL…AKLRGMMPWI (146 aa). Positions 191, 195, 227, and 231 each coordinate Mg(2+). Position 252 (S252) interacts with substrate.

Belongs to the ketol-acid reductoisomerase family. Mg(2+) serves as cofactor.

It catalyses the reaction (2R)-2,3-dihydroxy-3-methylbutanoate + NADP(+) = (2S)-2-acetolactate + NADPH + H(+). It carries out the reaction (2R,3R)-2,3-dihydroxy-3-methylpentanoate + NADP(+) = (S)-2-ethyl-2-hydroxy-3-oxobutanoate + NADPH + H(+). The protein operates within amino-acid biosynthesis; L-isoleucine biosynthesis; L-isoleucine from 2-oxobutanoate: step 2/4. Its pathway is amino-acid biosynthesis; L-valine biosynthesis; L-valine from pyruvate: step 2/4. Its function is as follows. Involved in the biosynthesis of branched-chain amino acids (BCAA). Catalyzes an alkyl-migration followed by a ketol-acid reduction of (S)-2-acetolactate (S2AL) to yield (R)-2,3-dihydroxy-isovalerate. In the isomerase reaction, S2AL is rearranged via a Mg-dependent methyl migration to produce 3-hydroxy-3-methyl-2-ketobutyrate (HMKB). In the reductase reaction, this 2-ketoacid undergoes a metal-dependent reduction by NADPH to yield (R)-2,3-dihydroxy-isovalerate. This Rhizobium rhizogenes (strain K84 / ATCC BAA-868) (Agrobacterium radiobacter) protein is Ketol-acid reductoisomerase (NADP(+)).